The following is a 545-amino-acid chain: Chaperonin GroEL (545 aa).

ATP contacts are provided by residues 30-33, K51, 87-91, G415, and D496; these read TLGP and DGTTT.

Belongs to the chaperonin (HSP60) family. Forms a cylinder of 14 subunits composed of two heptameric rings stacked back-to-back. Interacts with the co-chaperonin GroES.

It is found in the cytoplasm. The catalysed reaction is ATP + H2O + a folded polypeptide = ADP + phosphate + an unfolded polypeptide.. Together with its co-chaperonin GroES, plays an essential role in assisting protein folding. The GroEL-GroES system forms a nano-cage that allows encapsulation of the non-native substrate proteins and provides a physical environment optimized to promote and accelerate protein folding. This is Chaperonin GroEL from Chlorobaculum tepidum (strain ATCC 49652 / DSM 12025 / NBRC 103806 / TLS) (Chlorobium tepidum).